The chain runs to 359 residues: Protein Wnt-5b (359 aa).

Positions 1–17 (MPSLLLLFTAALLSSWA) are cleaved as a signal peptide. The cysteines at positions 83 and 94 are disulfide-linked. N-linked (GlcNAc...) asparagine glycans are attached at residues Asn93 and Asn99. Cystine bridges form between Cys133–Cys141, Cys143–Cys161, Cys217–Cys231, Cys219–Cys226, Cys288–Cys319, Cys304–Cys314, Cys318–Cys358, Cys334–Cys349, Cys336–Cys346, and Cys341–Cys342. Residue Ser223 is the site of O-palmitoleoyl serine; by PORCN attachment. Residues Asn291 and Asn305 are each glycosylated (N-linked (GlcNAc...) asparagine).

This sequence belongs to the Wnt family. In terms of assembly, interacts with PORCN. In terms of processing, palmitoleoylation is required for efficient binding to frizzled receptors. Depalmitoleoylation leads to Wnt signaling pathway inhibition.

The protein resides in the secreted. The protein localises to the extracellular space. It localises to the extracellular matrix. Ligand for members of the frizzled family of seven transmembrane receptors. Probable developmental protein. May be a signaling molecule which affects the development of discrete regions of tissues. Is likely to signal over only few cell diameters. This Pongo abelii (Sumatran orangutan) protein is Protein Wnt-5b (WNT5B).